The following is a 92-amino-acid chain: Small ribosomal subunit protein bS20 (92 aa).

This sequence belongs to the bacterial ribosomal protein bS20 family.

Its function is as follows. Binds directly to 16S ribosomal RNA. The protein is Small ribosomal subunit protein bS20 of Rickettsia africae (strain ESF-5).